A 388-amino-acid polypeptide reads, in one-letter code: Phosphoglycerate kinase (388 aa).

Residues aspartate 21–asparagine 23, arginine 36, histidine 59–arginine 62, arginine 114, and arginine 147 contribute to the substrate site. ATP contacts are provided by residues lysine 198, glutamate 315, and glycine 341–threonine 344.

Belongs to the phosphoglycerate kinase family. Monomer.

It is found in the cytoplasm. The enzyme catalyses (2R)-3-phosphoglycerate + ATP = (2R)-3-phospho-glyceroyl phosphate + ADP. It participates in carbohydrate degradation; glycolysis; pyruvate from D-glyceraldehyde 3-phosphate: step 2/5. The protein is Phosphoglycerate kinase of Buchnera aphidicola subsp. Schizaphis graminum (strain Sg).